The primary structure comprises 473 residues: 3-isopropylmalate dehydratase large subunit (473 aa).

[4Fe-4S] cluster is bound by residues Cys351, Cys414, and Cys417.

This sequence belongs to the aconitase/IPM isomerase family. LeuC type 1 subfamily. In terms of assembly, heterodimer of LeuC and LeuD. It depends on [4Fe-4S] cluster as a cofactor.

The enzyme catalyses (2R,3S)-3-isopropylmalate = (2S)-2-isopropylmalate. Its pathway is amino-acid biosynthesis; L-leucine biosynthesis; L-leucine from 3-methyl-2-oxobutanoate: step 2/4. Catalyzes the isomerization between 2-isopropylmalate and 3-isopropylmalate, via the formation of 2-isopropylmaleate. The protein is 3-isopropylmalate dehydratase large subunit of Polaromonas sp. (strain JS666 / ATCC BAA-500).